The following is an 847-amino-acid chain: Lethal(3)malignant brain tumor-like protein 1 (847 aa).

Composition is skewed to basic and acidic residues over residues phenylalanine 65–valine 82 and alanine 144–aspartate 155. Disordered regions lie at residues phenylalanine 65–isoleucine 87, alanine 142–arginine 163, and valine 237–lysine 296. MBT repeat units lie at residues tryptophan 300–proline 400, phenylalanine 408–proline 507, and phenylalanine 516–proline 611. The tract at residues phenylalanine 473–tyrosine 480 is interaction with monomethylated and dimethylated peptides. A CCHHC-type zinc finger spans residues serine 639–leucine 682. Zn(2+)-binding residues include cysteine 648, cysteine 653, histidine 666, and cysteine 672. Residues tryptophan 778 to alanine 842 enclose the SAM domain.

Homodimer.

It is found in the nucleus. Its function is as follows. Polycomb group (PcG) protein that specifically recognizes and binds mono- and dimethyllysine residues on target proteins, thereby acting as a 'reader' of a network of post-translational modifications. PcG proteins maintain the transcriptionally repressive state of genes: acts as a chromatin compaction factor by recognizing and binding mono- and dimethylated histone H1b/H1-4 at 'Lys-26' (H1bK26me1 and H1bK26me2) and histone H4 at 'Lys-20' (H4K20me1 and H4K20me2), leading to condense chromatin and repress transcription. The polypeptide is Lethal(3)malignant brain tumor-like protein 1 (L3MBTL1) (Gallus gallus (Chicken)).